A 465-amino-acid chain; its full sequence is A-type ATP synthase subunit B (465 aa).

This sequence belongs to the ATPase alpha/beta chains family. As to quaternary structure, has multiple subunits with at least A(3), B(3), C, D, E, F, H, I and proteolipid K(x).

It is found in the cell membrane. Functionally, component of the A-type ATP synthase that produces ATP from ADP in the presence of a proton gradient across the membrane. The B chain is a regulatory subunit. The protein is A-type ATP synthase subunit B of Thermococcus onnurineus (strain NA1).